Here is a 281-residue protein sequence, read N- to C-terminus: MKRVGAHVSIAGGVENAPLNAQKIGAKAFAMFTRNQRQWHSAPLTAASIEAFRRNCDEAGFLPEHILPHDSYLINLGAPEADKIEKSRKAFVTEMQRAEALGLTMLNFHPGSHLNLTDEDACLKTIAESVNRSLDATAGVTAVIENTAGQGSNLGWRFEHLARIIELVEDKSRVGVCLDTCHLFASGYDLRTPEAFDATLREFDRVVGLLYLKGMHLNDAKQKLGSKVDRHECLGKGMIGIDAFAHIMRHPALEEIPLILETPNAEGWAEEIAMLYGFTNE.

The Zn(2+) site is built by His-69, His-109, Glu-145, Asp-179, His-182, His-216, Asp-229, His-231, and Glu-261.

The protein belongs to the AP endonuclease 2 family. Zn(2+) serves as cofactor.

It carries out the reaction Endonucleolytic cleavage to 5'-phosphooligonucleotide end-products.. Functionally, endonuclease IV plays a role in DNA repair. It cleaves phosphodiester bonds at apurinic or apyrimidinic (AP) sites, generating a 3'-hydroxyl group and a 5'-terminal sugar phosphate. The polypeptide is Probable endonuclease 4 (Chlorobaculum tepidum (strain ATCC 49652 / DSM 12025 / NBRC 103806 / TLS) (Chlorobium tepidum)).